A 1400-amino-acid polypeptide reads, in one-letter code: DNA-directed RNA polymerase subunit beta' (1400 aa).

Residues Cys70, Cys72, Cys85, and Cys88 each contribute to the Zn(2+) site. Mg(2+) is bound by residues Asp460, Asp462, and Asp464. Positions 814, 888, 895, and 898 each coordinate Zn(2+). Residues 1368-1400 (RQAKRAEAQEGPSAEQATDNLAALLNAGFSSDE) are disordered.

It belongs to the RNA polymerase beta' chain family. The RNAP catalytic core consists of 2 alpha, 1 beta, 1 beta' and 1 omega subunit. When a sigma factor is associated with the core the holoenzyme is formed, which can initiate transcription. The cofactor is Mg(2+). Zn(2+) serves as cofactor.

It carries out the reaction RNA(n) + a ribonucleoside 5'-triphosphate = RNA(n+1) + diphosphate. In terms of biological role, DNA-dependent RNA polymerase catalyzes the transcription of DNA into RNA using the four ribonucleoside triphosphates as substrates. This is DNA-directed RNA polymerase subunit beta' from Vibrio parahaemolyticus serotype O3:K6 (strain RIMD 2210633).